Here is a 234-residue protein sequence, read N- to C-terminus: Interleukin-34 (234 aa).

The first 20 residues, 1 to 20 (MPQGLAWLRYLGILLGMALG), serve as a signal peptide directing secretion. N76 carries an N-linked (GlcNAc...) asparagine glycan. Residues 191 to 234 (EAPQPQPRSPASAQCEAAQLYPLPQPPSTSLPRVLGPSAGPPTQ) are disordered.

This sequence belongs to the IL-34 family. In terms of assembly, homodimer. Interacts with CSF1R.

The protein localises to the secreted. Cytokine that promotes the proliferation, survival and differentiation of monocytes and macrophages. Promotes the release of pro-inflammatory chemokines, and thereby plays an important role in innate immunity and in inflammatory processes. Plays an important role in the regulation of osteoclast proliferation and differentiation, and in the regulation of bone resorption. Signaling via CSF1R and its downstream effectors stimulates phosphorylation of MAPK1/ERK2 AND MAPK3/ERK1. The sequence is that of Interleukin-34 from Bos taurus (Bovine).